A 486-amino-acid chain; its full sequence is NADH-quinone oxidoreductase subunit N (486 aa).

Transmembrane regions (helical) follow at residues 8-28 (LIALLPFLILLLTVVIVILSI), 36-56 (FIAFLTIISLIVSLCSLYFLI), 74-94 (ILYISMIIISSIATCVFAYPW), 104-124 (EFYLLTLISTLGAIFLTISNH), 125-145 (MASLFISVELMSLPIFGLIAY), 160-180 (LVLSGVSSSFLLLGISWIYAI), 204-224 (VLFGIIMVLMSFFFKLSMVPF), 239-259 (VLSFFSVSGKIAIFSILLYFF), 270-290 (IFLILSLISFFSILFGNLMAI), 298-318 (FFGYSSISQIGYLLIILLVSK), 329-349 (GIFLLNYLCTNIVYFGVINLF), 374-394 (ASIVTIVLLSLGGIPITLGFF), 407-427 (HLWTIGASFLIGTILGLYGYL), and 459-479 (ILIFISGIMLLILGIYPNPLI).

It belongs to the complex I subunit 2 family. NDH-1 is composed of 13 different subunits. Subunits NuoA, H, J, K, L, M, N constitute the membrane sector of the complex.

It localises to the cell membrane. It catalyses the reaction a quinone + NADH + 5 H(+)(in) = a quinol + NAD(+) + 4 H(+)(out). NDH-1 shuttles electrons from NADH, via FMN and iron-sulfur (Fe-S) centers, to quinones in the respiratory chain. The immediate electron acceptor for the enzyme in this species is believed to be ubiquinone. Couples the redox reaction to proton translocation (for every two electrons transferred, four hydrogen ions are translocated across the cytoplasmic membrane), and thus conserves the redox energy in a proton gradient. This chain is NADH-quinone oxidoreductase subunit N, found in Buchnera aphidicola subsp. Schizaphis graminum (strain Sg).